The primary structure comprises 358 residues: Probable (S)-tetrahydroprotoberberine N-methyltransferase 2 (358 aa).

S-adenosyl-L-methionine is bound by residues Ser98, Gly136, Asn160, Gln164, Asp186, Val187, and Ile202. Cys333 is an active-site residue.

Belongs to the CFA/CMAS family. As to quaternary structure, homodimer.

It localises to the cytoplasm. It catalyses the reaction (S)-stylopine + S-adenosyl-L-methionine = (S)-cis-N-methylstylopine + S-adenosyl-L-homocysteine. It carries out the reaction (S)-tetrahydropalmatine + S-adenosyl-L-methionine = (S)-cis-N-methyltetrahydropalmatine + S-adenosyl-L-homocysteine. It participates in alkaloid biosynthesis. N-methyltransferase with a strict substrate specificity for (R,S)-tetrahydropalmatine or (R,S)-stylopine. This Papaver bracteatum (Great scarlet poppy) protein is Probable (S)-tetrahydroprotoberberine N-methyltransferase 2.